We begin with the raw amino-acid sequence, 125 residues long: uncharacterized protein (125 aa).

The disordered stretch occupies residues 50 to 73; the sequence is QTSDFSDESSRSDSSSVTNENEVS.

This is an uncharacterized protein from Microplitis demolitor (Parasitoid wasp).